A 427-amino-acid polypeptide reads, in one-letter code: Large ribosomal subunit protein uL4 (427 aa).

Ala-2 is subject to N-acetylalanine. Position 14 is an N6-acetyllysine (Lys-14). Arg-97 is subject to Omega-N-methylarginine. Lys-106 carries the post-translational modification N6-acetyllysine. Residue Lys-239 forms a Glycyl lysine isopeptide (Lys-Gly) (interchain with G-Cter in SUMO2) linkage. Lys-259 carries the N6-acetyllysine modification. A Phosphothreonine modification is found at Thr-266. Phosphoserine occurs at positions 290 and 295. Residue Arg-300 is modified to Citrulline. Residue Lys-327 forms a Glycyl lysine isopeptide (Lys-Gly) (interchain with G-Cter in SUMO2) linkage. Residues Lys-333 and Lys-353 each carry the N6-acetyllysine modification. At Lys-364 the chain carries N6-acetyllysine; alternate. Lys-364 is covalently cross-linked (Glycyl lysine isopeptide (Lys-Gly) (interchain with G-Cter in SUMO1); alternate). A Phosphoserine modification is found at Ser-365. Positions 369–427 (AAVAGKKPVVGKKGKKAAVGVKKQKKPLVGKKAAATKKPAPEKKPAEKKPTTEEKKPAA) are disordered. Positions 377 to 397 (VVGKKGKKAAVGVKKQKKPLV) are enriched in basic residues. Over residues 407–427 (PAPEKKPAEKKPTTEEKKPAA) the composition is skewed to basic and acidic residues.

It belongs to the universal ribosomal protein uL4 family. As to quaternary structure, component of the large ribosomal subunit. May bind IPO9 with low affinity. Interacts with RBM3. Post-translationally, citrullinated by PADI4.

It localises to the cytoplasm. Functionally, component of the large ribosomal subunit. The ribosome is a large ribonucleoprotein complex responsible for the synthesis of proteins in the cell. In Pongo abelii (Sumatran orangutan), this protein is Large ribosomal subunit protein uL4 (RPL4).